Here is a 342-residue protein sequence, read N- to C-terminus: UDP-3-O-acylglucosamine N-acyltransferase (342 aa).

H234 acts as the Proton acceptor in catalysis.

Belongs to the transferase hexapeptide repeat family. LpxD subfamily. As to quaternary structure, homotrimer.

It carries out the reaction a UDP-3-O-[(3R)-3-hydroxyacyl]-alpha-D-glucosamine + a (3R)-hydroxyacyl-[ACP] = a UDP-2-N,3-O-bis[(3R)-3-hydroxyacyl]-alpha-D-glucosamine + holo-[ACP] + H(+). Its pathway is bacterial outer membrane biogenesis; LPS lipid A biosynthesis. Catalyzes the N-acylation of UDP-3-O-acylglucosamine using 3-hydroxyacyl-ACP as the acyl donor. Is involved in the biosynthesis of lipid A, a phosphorylated glycolipid that anchors the lipopolysaccharide to the outer membrane of the cell. The polypeptide is UDP-3-O-acylglucosamine N-acyltransferase (Oleidesulfovibrio alaskensis (strain ATCC BAA-1058 / DSM 17464 / G20) (Desulfovibrio alaskensis)).